Consider the following 40-residue polypeptide: Photosystem II reaction center protein J (40 aa).

Residues 8–28 (IPLWIIGTVTGIPVIGLIGIF) form a helical membrane-spanning segment.

Belongs to the PsbJ family. As to quaternary structure, PSII is composed of 1 copy each of membrane proteins PsbA, PsbB, PsbC, PsbD, PsbE, PsbF, PsbH, PsbI, PsbJ, PsbK, PsbL, PsbM, PsbT, PsbX, PsbY, PsbZ, Psb30/Ycf12, at least 3 peripheral proteins of the oxygen-evolving complex and a large number of cofactors. It forms dimeric complexes.

Its subcellular location is the plastid. The protein localises to the chloroplast thylakoid membrane. Functionally, one of the components of the core complex of photosystem II (PSII). PSII is a light-driven water:plastoquinone oxidoreductase that uses light energy to abstract electrons from H(2)O, generating O(2) and a proton gradient subsequently used for ATP formation. It consists of a core antenna complex that captures photons, and an electron transfer chain that converts photonic excitation into a charge separation. In Citrus sinensis (Sweet orange), this protein is Photosystem II reaction center protein J.